A 456-amino-acid polypeptide reads, in one-letter code: UDP-glycosyltransferase 74D1 (456 aa).

UDP-alpha-D-glucose contacts are provided by residues Ser279, 332 to 334 (SPQ), 349 to 357 (HCGWNSTLE), and 371 to 374 (YSDQ).

Belongs to the UDP-glycosyltransferase family. Expressed in leaves.

Glucosyltransferase that glucosylates jasmonate (JA) and JA derivatives. Also active on indole-3-acetic acid (IAA), 4-coumrate, cinnamate and caffeate. This Arabidopsis thaliana (Mouse-ear cress) protein is UDP-glycosyltransferase 74D1 (UGT74D1).